A 356-amino-acid polypeptide reads, in one-letter code: Heat-inducible transcription repressor HrcA (356 aa).

Belongs to the HrcA family.

Its function is as follows. Negative regulator of class I heat shock genes (grpE-dnaK-dnaJ and groELS operons). Prevents heat-shock induction of these operons. The chain is Heat-inducible transcription repressor HrcA from Bartonella quintana (strain Toulouse) (Rochalimaea quintana).